We begin with the raw amino-acid sequence, 529 residues long: Aldehyde dehydrogenase 1 (529 aa).

251 to 256 (GSTYVG) is a binding site for NAD(+). Residues E273 and C307 contribute to the active site.

It belongs to the aldehyde dehydrogenase family.

The enzyme catalyses an aldehyde + NAD(+) + H2O = a carboxylate + NADH + 2 H(+). The chain is Aldehyde dehydrogenase 1 from Entamoeba histolytica (strain ATCC 30459 / HM-1:IMSS / ABRM).